Here is a 357-residue protein sequence, read N- to C-terminus: GDP-polyphosphate phosphotransferase (357 aa).

A disordered region spans residues M1–N83. Residues Q14–P25 show a composition bias toward low complexity. A compositionally biased stretch (basic residues) spans A26–R40.

It belongs to the polyphosphate kinase 2 (PPK2) family. Class I subfamily. Homotetramer. Also forms octamers. Mg(2+) serves as cofactor. Mn(2+) is required as a cofactor.

The enzyme catalyses [phosphate](n) + GTP = [phosphate](n+1) + GDP. It catalyses the reaction [phosphate](n) + ATP = [phosphate](n+1) + ADP. Functionally, uses inorganic polyphosphate (polyP) as a donor to convert GDP to GTP and ADP to ATP. Shows a preference for GDP. Can also catalyze the synthesis of polyP from GTP or ATP, but the rate of polyP utilization is 75-fold greater than the rate of polyP synthesis. This is GDP-polyphosphate phosphotransferase from Pseudomonas aeruginosa (strain ATCC 15692 / DSM 22644 / CIP 104116 / JCM 14847 / LMG 12228 / 1C / PRS 101 / PAO1).